The sequence spans 493 residues: Lysine--tRNA ligase (493 aa).

2 residues coordinate Mg(2+): glutamate 404 and glutamate 411.

The protein belongs to the class-II aminoacyl-tRNA synthetase family. As to quaternary structure, homodimer. Requires Mg(2+) as cofactor.

It localises to the cytoplasm. It carries out the reaction tRNA(Lys) + L-lysine + ATP = L-lysyl-tRNA(Lys) + AMP + diphosphate. The sequence is that of Lysine--tRNA ligase from Oceanobacillus iheyensis (strain DSM 14371 / CIP 107618 / JCM 11309 / KCTC 3954 / HTE831).